Reading from the N-terminus, the 529-residue chain is Low affinity inorganic phosphate transporter 5 (529 aa).

Residues 1–21 are Cytoplasmic-facing; the sequence is MASNNLNVLNALDTAHTQWYH. Residues 22–42 form a helical membrane-spanning segment; it reads VTAVVIAGMGFFTDAYDLFCI. The Extracellular segment spans residues 43 to 71; sequence STISKLLGRLYYYDPHTHAPGKLPHTVNN. The chain crosses the membrane as a helical span at residues 72 to 92; it reads WVTGVALVGTLTGQLVFGWLG. Topologically, residues 93–99 are cytoplasmic; that stretch reads DKLGRKK. A helical transmembrane segment spans residues 100–120; the sequence is VYGLTLILMVICALSSGLSFG. At 121 to 124 the chain is on the extracellular side; that stretch reads YSRK. A helical transmembrane segment spans residues 125–145; the sequence is VVIGTLCFFRFWLGFGIGGDY. Over 146-163 the chain is Cytoplasmic; the sequence is PLSATIMSEYANKRTRGA. Residues 164–184 traverse the membrane as a helical segment; sequence FIAAVFAMQGVGIIFAGLVLM. Residues 185 to 211 are Extracellular-facing; it reads TVSKVFLMRYAGKAFSTDEVFSTEPEA. Residues 212–232 form a helical membrane-spanning segment; the sequence is DYVWRIVLMLGALPALLTYYW. Residues 233-291 lie on the Cytoplasmic side of the membrane; it reads RMKMPETGRYTAIIEGNAKQAAIDMGKVLEIEIQAEGEKLAKFKSANDYSLLSNEFFQR. A helical transmembrane segment spans residues 292 to 312; sequence HGLHLIGTMSTWFLLDIAFYS. Topologically, residues 313–344 are extracellular; it reads QNLTQKDIFPTMGLVSDAKSISALREMFETSR. Asn314 carries N-linked (GlcNAc...) asparagine glycosylation. The helical transmembrane segment at 345-365 threads the bilayer; the sequence is AMFVIALLGTFPGYWFTVFFI. Over 366 to 374 the chain is Cytoplasmic; sequence EKIGRFKIQ. Residues 375–395 traverse the membrane as a helical segment; sequence LMGFFMMSIFMAIIGVRYDYL. Topologically, residues 396–405 are extracellular; that stretch reads KTKDHKWTFA. A helical transmembrane segment spans residues 406-426; that stretch reads ALYGLTFFFANSGPNSTTFVL. At 427–472 the chain is on the cytoplasmic side; the sequence is PAELFPTRVRSTCHALSAASGKAGAMVSAFGVQQYTQDGEVHKIKK. A helical transmembrane segment spans residues 473–493; that stretch reads AMLFLAFTNMVGFCCTFLVTE. Residues 494-529 are Extracellular-facing; sequence TKGRSLEEISGEDENQNETKMKGRPVSGGHQDDGWD. Residues 500–529 form a disordered region; that stretch reads EEISGEDENQNETKMKGRPVSGGHQDDGWD. Asn510 is a glycosylation site (N-linked (GlcNAc...) asparagine).

Belongs to the major facilitator superfamily. Phosphate:H(+) symporter (TC 2.A.1.9) family. In terms of tissue distribution, expressed at low levels in non-mycorrhized roots.

Its subcellular location is the cell membrane. It catalyses the reaction phosphate(in) + H(+)(in) = phosphate(out) + H(+)(out). Low-affinity transporter for external inorganic phosphate (Pi) probably involved in the acquisition of phosphate released by arbuscular mycorrhizal (AM) fungi during AM symbiosis. The protein is Low affinity inorganic phosphate transporter 5 of Petunia hybrida (Petunia).